We begin with the raw amino-acid sequence, 227 residues long: Ras-related protein Rab-3C (227 aa).

GTP-binding residues include serine 39, glycine 42, lysine 43, threonine 44, serine 45, threonine 56, serine 57, serine 61, and threonine 62. Threonine 44 provides a ligand contact to Mg(2+). The Switch 1 motif lies at 53-66 (DSFTSAFVSTVGID). Residues threonine 62 and aspartate 85 each coordinate Mg(2+). Threonine 86 bears the Phosphothreonine mark. The Switch 2 signature appears at 86 to 104 (TAGQERYRTITTAYYRGAM). GTP contacts are provided by glycine 88, asparagine 143, lysine 144, aspartate 146, alanine 174, and lysine 175. Residues serine 196 and serine 198 each carry the phosphoserine modification. A Phosphothreonine modification is found at threonine 206. S-geranylgeranyl cysteine attachment occurs at residues cysteine 225 and cysteine 227. Cysteine 227 is subject to Cysteine methyl ester.

This sequence belongs to the small GTPase superfamily. Rab family. In terms of assembly, interacts with RIMS1, RIMS2, RPH3A and RPH3AL. The GTP-bound form interacts with REP15. Interacts with GDI2, CHM and CHML; phosphorylation at Thr-86 disrupts these interactions. Interacts with MADD (via uDENN domain); the GTP-bound form is preferred for interaction. It depends on Mg(2+) as a cofactor. Post-translationally, phosphorylation of Thr-86 in the switch II region by LRRK2 prevents the association of RAB regulatory proteins, including CHM, CHML and RAB GDP dissociation inhibitor GDI2.

It localises to the cell membrane. The enzyme catalyses GTP + H2O = GDP + phosphate + H(+). Regulated by guanine nucleotide exchange factors (GEFs) which promote the exchange of bound GDP for free GTP. Regulated by GTPase activating proteins (GAPs) which increase the GTP hydrolysis activity. Inhibited by GDP dissociation inhibitors (GDIs) which prevent Rab-GDP dissociation. Functionally, the small GTPases Rab are key regulators of intracellular membrane trafficking, from the formation of transport vesicles to their fusion with membranes. Rabs cycle between an inactive GDP-bound form and an active GTP-bound form that is able to recruit to membranes different sets of downstream effectors directly responsible for vesicle formation, movement, tethering and fusion. This chain is Ras-related protein Rab-3C (RAB3C), found in Bos taurus (Bovine).